Reading from the N-terminus, the 612-residue chain is Zinc metalloproteinase-disintegrin-like HV1 (612 aa).

Residues 1-20 (MIQVLLVTICLAVFPYQGSS) form the signal peptide. Positions 21 to 188 (IILESGNVND…SIKEDSQSNL (168 aa)) are excised as a propeptide. Residues 200 to 396 (KYVKFFLVAD…NMPQCILKKP (197 aa)) enclose the Peptidase M12B domain. N219 is a glycosylation site (N-linked (GlcNAc...) asparagine). 3 disulfide bridges follow: C311-C391, C351-C375, and C353-C358. Residue H336 participates in Zn(2+) binding. E337 is a catalytic residue. The Zn(2+) site is built by H340 and H346. Positions 404 to 489 (PPVCGNYFVE…AECTDRFQRN (86 aa)) constitute a Disintegrin domain. The Ca(2+) site is built by V406, N409, F411, E413, E416, and D419. 14 disulfides stabilise this stretch: C407–C436, C418–C431, C420–C426, C430–C453, C444–C450, C449–C475, C462–C482, C469–C500, C493–C505, C512–C562, C527–C573, C540–C550, C557–C599, and C593–C605. The short motif at 468–470 (ECD) is the D/ECD-tripeptide element. The Ca(2+) site is built by D470, M471, D473, D484, and R485. The N-linked (GlcNAc...) asparagine glycan is linked to N502. Residue N609 is glycosylated (N-linked (GlcNAc...) asparagine).

It belongs to the venom metalloproteinase (M12B) family. P-III subfamily. P-IIIc sub-subfamily. Homodimer; disulfide-linked. Requires Zn(2+) as cofactor. Expressed by the venom gland.

It localises to the secreted. Its activity is regulated as follows. Inhibited by EDTA and EGTA. Functionally, snake venom zinc metalloproteinase-disintegrin-like that potently activates prothrombin (F2). Does not elicit any hemorrhagic response. Barely inhibits collagen-induced platelet aggregation. Hydrolyzes the alpha-chain of fibrin and fibrinogen (FGA), without affecting the Bbeta- and gamma-chains. Induces apoptosis in cultured vascular endothelial cells. The protein is Zinc metalloproteinase-disintegrin-like HV1 of Protobothrops flavoviridis (Habu).